The sequence spans 348 residues: Anthranilate phosphoribosyltransferase (348 aa).

Residues Gly81, 84–85 (GD), Thr89, 91–94 (NIST), 109–117 (KHGNRSSSG), and Ser121 contribute to the 5-phospho-alpha-D-ribose 1-diphosphate site. Gly81 is a binding site for anthranilate. Ser93 serves as a coordination point for Mg(2+). Asn112 lines the anthranilate pocket. Arg167 provides a ligand contact to anthranilate. Mg(2+)-binding residues include Asp226 and Glu227.

This sequence belongs to the anthranilate phosphoribosyltransferase family. As to quaternary structure, homodimer. Mg(2+) serves as cofactor.

It carries out the reaction N-(5-phospho-beta-D-ribosyl)anthranilate + diphosphate = 5-phospho-alpha-D-ribose 1-diphosphate + anthranilate. The protein operates within amino-acid biosynthesis; L-tryptophan biosynthesis; L-tryptophan from chorismate: step 2/5. Its function is as follows. Catalyzes the transfer of the phosphoribosyl group of 5-phosphorylribose-1-pyrophosphate (PRPP) to anthranilate to yield N-(5'-phosphoribosyl)-anthranilate (PRA). In Nitrosopumilus maritimus (strain SCM1), this protein is Anthranilate phosphoribosyltransferase.